Here is a 606-residue protein sequence, read N- to C-terminus: NADH-ubiquinone oxidoreductase chain 5 (606 aa).

Helical transmembrane passes span 1 to 21, 43 to 63, 87 to 107, 117 to 137, 140 to 160, 171 to 191, 201 to 221, 241 to 261, 273 to 293, 310 to 330, 365 to 385, 409 to 429, 457 to 477, 488 to 508, and 582 to 602; these read MNMF…PIIM, AFMI…ETIF, MIFV…SMWY, FFKY…ANNM, LFIG…WWYG, AVLY…WFLL, IFIT…LAAT, TPVS…FLLI, IQTL…ICAL, LGLM…LHIC, VLPF…GMPF, LLIT…IMFF, LLIG…PTTI, MTAL…NLTT, and GLIK…LLIL.

This sequence belongs to the complex I subunit 5 family. In terms of assembly, core subunit of respiratory chain NADH dehydrogenase (Complex I) which is composed of 45 different subunits.

The protein localises to the mitochondrion inner membrane. It catalyses the reaction a ubiquinone + NADH + 5 H(+)(in) = a ubiquinol + NAD(+) + 4 H(+)(out). Functionally, core subunit of the mitochondrial membrane respiratory chain NADH dehydrogenase (Complex I) which catalyzes electron transfer from NADH through the respiratory chain, using ubiquinone as an electron acceptor. Essential for the catalytic activity and assembly of complex I. In Canis lupus familiaris (Dog), this protein is NADH-ubiquinone oxidoreductase chain 5 (MT-ND5).